The chain runs to 712 residues: Amine oxidase [copper-containing] gamma 1 (712 aa).

The first 24 residues, 1–24, serve as a signal peptide directing secretion; that stretch reads MAEPSFARLFLLFFSFLLIFATYS. N-linked (GlcNAc...) asparagine glycosylation is found at Asn-146 and Asn-173. Cys-188 and Cys-210 are oxidised to a cystine. 352–363 contributes to the substrate binding site; sequence YMDAGELGLGPT. The active-site Proton acceptor is the Asp-354. A disulfide bridge connects residues Cys-373 and Cys-399. 439 to 444 contacts substrate; sequence VGNYDY. Tyr-442 acts as the Schiff-base intermediate with substrate; via topaquinone in catalysis. Residue Tyr-442 is modified to 2',4',5'-topaquinone. Residues His-499 and His-501 each coordinate Cu cation. Positions 508, 509, and 510 each coordinate Mn(2+). N-linked (GlcNAc...) asparagine glycosylation is found at Asn-516 and Asn-617. Residues Asp-651 and Ile-652 each contribute to the Mn(2+) site. Cu cation is bound at residue His-662.

The protein belongs to the copper/topaquinone oxidase family. As to quaternary structure, homodimer. The cofactor is Cu cation. It depends on Zn(2+) as a cofactor. Requires L-topaquinone as cofactor. Mn(2+) serves as cofactor. Post-translationally, topaquinone (TPQ) is generated by copper-dependent autoxidation of a specific tyrosyl residue. As to expression, mostly expressed in roots, stems and flowers, and, at lower levels, in leaves and cotyledons.

It is found in the secreted. The protein resides in the extracellular space. It localises to the apoplast. It catalyses the reaction a primary methyl amine + O2 + H2O = an aldehyde + H2O2 + NH4(+). Its pathway is amine and polyamine degradation; putrescine degradation. Its function is as follows. Copper amine oxidase that can use putrescine and spermidine as substrates. Required for abscisic acid- (ABA) and polyamine- (PA) and H(2)O(2)-dependent induced nitric oxide (NO) biosynthesis. Involved in ABA signal transduction and in responses to osmotic stress. This is Amine oxidase [copper-containing] gamma 1 from Arabidopsis thaliana (Mouse-ear cress).